The chain runs to 923 residues: MKHQVLLPLLVTTAIIAGSVGVYTHSKPLLGQSQDQVLPPFTPPLQNGHIDLQGKYIVSTLDQVNATHINIYANYNGPEASYAMPKNKLITHILVSIVINDVNQLGIKITDRTYRHFEVPYSNLFPHDKVFNFPANNQFDITLPKRGEAFYLTIKRKDTGEVVFDTNNQFFVYSDLYHEFTVAMQNEFIYGLGERRNKQFLYDSGEYTFLNKDQYESVADGHPDQQTYGTHPMYLRRENSGNFHVVFLRNYNSIQAVYSKGKSLTYKVVGGLLEFKIFLGDKSPETSLKLYHSYVNGFNLHPFWAHGFHQCRWGYKTSEMMTTVWDTFNTNGLPFDTIWSDIDYMKDLTDFTIDTSRYDKAQMNTMLDRSVAAGVHWVPIIDAGIALGDVSNERGKELGVYQKSNKTGEDLIGCVWPGKVNYPDFNHPLSQEFWAEGLMNLTKNYGITPSGFWIDMNEFSNFINGEISEDQNCIMPGDTTTNPNYLGNSVEDFYTRIPFEVGGADHPQQEKTMSYDAPKYNYADAKTVYIPNYELREFDFHNLNGFSEGIATNYALKKMGNKLPFIISRSQIAGSGQFVQHWTGDNGSQWDFLQYSLGEIFNFNMYGIPMTGADICGFAQNTTAELCARWMQVGAFYPFSRNHNSNDTIPQEPYAFPDSTYVLDSSKKSLRLRYALLKQYYSHFVSSNGVGTVFRPTFFNFPDDASLLTNDQQFMIGDSLLGQPVLVQSATPARFSHSSYLTFPSSGAFYDFVTDVATLNAQRYTNANNGQIKNVKFDDIMPLYIREGYTVFTQLASTALRSRLLDSNFELHVALAKSGTSYTAKGKFITIQDYSDDNLIQKCIGANNCSFDIQVTGVVNGANLDLTIQIAGESAQTNFETINVNKIIPYAADLKFAASTATFTISKNGTINASIPLQAAQQE.

The N-terminal stretch at 1-17 is a signal peptide; that stretch reads MKHQVLLPLLVTTAIIA. Residues 18–36 constitute a propeptide that is removed on maturation; that stretch reads GSVGVYTHSKPLLGQSQDQ. Asn65, Asn405, and Asn440 each carry an N-linked (GlcNAc...) asparagine glycan. Catalysis depends on Asp455, which acts as the Nucleophile. Residue Glu458 is part of the active site. Asp585 serves as the catalytic Proton donor. Asn586, Asn621, Asn646, Asn848, Asn908, and Asn912 each carry an N-linked (GlcNAc...) asparagine glycan.

It belongs to the glycosyl hydrolase 31 family.

The protein localises to the lysosome. It localises to the secreted. The catalysed reaction is Hydrolysis of terminal, non-reducing (1-&gt;4)-linked alpha-D-glucose residues with release of alpha-D-glucose.. In terms of biological role, essential for the degradation of glycogen to glucose in lysosomes. Has both alpha-1,4 and alpha-1,6-glucosidase activity. This Tetrahymena pyriformis protein is Lysosomal acid alpha-glucosidase.